The chain runs to 166 residues: Cilia- and flagella-associated protein 68 (166 aa).

2 mn regions span residues Thr-98–Pro-109 and Lys-139–Pro-149.

Belongs to the CFAP68 family. In terms of assembly, microtubule inner protein component of sperm flagellar doublet microtubules.

The protein resides in the cytoplasm. Its subcellular location is the cytoskeleton. The protein localises to the cilium axoneme. It localises to the flagellum axoneme. It is found in the nucleus. The protein resides in the cell projection. Its subcellular location is the cilium. Its function is as follows. Microtubule inner protein (MIP) part of the dynein-decorated doublet microtubules (DMTs) in cilia axoneme, which is required for motile cilia beating. This chain is Cilia- and flagella-associated protein 68 (Cfap68), found in Mus musculus (Mouse).